Consider the following 972-residue polypeptide: mRNA transport regulator MTR10 (972 aa).

The protein localises to the nucleus. Its function is as follows. Involved in mRNA transport from nucleus to cytoplasm. In Saccharomyces cerevisiae (strain ATCC 204508 / S288c) (Baker's yeast), this protein is mRNA transport regulator MTR10 (MTR10).